We begin with the raw amino-acid sequence, 426 residues long: DNA polymerase processivity factor component OPG148 (426 aa).

This sequence belongs to the orthopoxvirus OPG148 family. Interacts with the DNA polymerase catalytic subunit OPG071. Interacts with UDG/OPG116. Component of the uracil-DNA glycosylase(UDG)-OPG148-polymerase complex; OPG148 and UDG form a heterodimeric processivity factor that associates with OPG071 to form the processive polymerase holoenzyme. Interacts with OPG117.

In terms of biological role, plays an essential role in viral DNA replication by acting as the polymerase processivity factor together with protein OPG116. Serves as a bridge which links the DNA polymerase OPG071 and the uracil DNA glycosylase. In Variola virus (isolate Human/India/Ind3/1967) (VARV), this protein is DNA polymerase processivity factor component OPG148 (OPG148).